The sequence spans 201 residues: Holliday junction branch migration complex subunit RuvA (201 aa).

The interval 1–64 (MYAYIRGKLT…EDAQLLYGFI (64 aa)) is domain I. The domain II stretch occupies residues 65 to 143 (NEEEKDMFLS…ITRETTETLL (79 aa)). Positions 144 to 150 (SMNEENS) are flexible linker. The interval 151–201 (NSENLVKEALLALEALGYSKREISKVEKVLNKSTFDSVDEAVKLGLKTLVS) is domain III.

Belongs to the RuvA family. Homotetramer. Forms an RuvA(8)-RuvB(12)-Holliday junction (HJ) complex. HJ DNA is sandwiched between 2 RuvA tetramers; dsDNA enters through RuvA and exits via RuvB. An RuvB hexamer assembles on each DNA strand where it exits the tetramer. Each RuvB hexamer is contacted by two RuvA subunits (via domain III) on 2 adjacent RuvB subunits; this complex drives branch migration. In the full resolvosome a probable DNA-RuvA(4)-RuvB(12)-RuvC(2) complex forms which resolves the HJ.

It localises to the cytoplasm. Functionally, the RuvA-RuvB-RuvC complex processes Holliday junction (HJ) DNA during genetic recombination and DNA repair, while the RuvA-RuvB complex plays an important role in the rescue of blocked DNA replication forks via replication fork reversal (RFR). RuvA specifically binds to HJ cruciform DNA, conferring on it an open structure. The RuvB hexamer acts as an ATP-dependent pump, pulling dsDNA into and through the RuvAB complex. HJ branch migration allows RuvC to scan DNA until it finds its consensus sequence, where it cleaves and resolves the cruciform DNA. The polypeptide is Holliday junction branch migration complex subunit RuvA (Staphylococcus haemolyticus (strain JCSC1435)).